A 203-amino-acid chain; its full sequence is Urease accessory protein UreG (203 aa).

12 to 19 (GPVGSGKT) provides a ligand contact to GTP.

Belongs to the SIMIBI class G3E GTPase family. UreG subfamily. As to quaternary structure, homodimer. UreD, UreF and UreG form a complex that acts as a GTP-hydrolysis-dependent molecular chaperone, activating the urease apoprotein by helping to assemble the nickel containing metallocenter of UreC. The UreE protein probably delivers the nickel.

The protein localises to the cytoplasm. Facilitates the functional incorporation of the urease nickel metallocenter. This process requires GTP hydrolysis, probably effectuated by UreG. The chain is Urease accessory protein UreG from Nitrosococcus oceani (strain ATCC 19707 / BCRC 17464 / JCM 30415 / NCIMB 11848 / C-107).